Consider the following 64-residue polypeptide: Frontoxin V (64 aa).

Cystine bridges form between cysteine 3/cysteine 24, cysteine 6/cysteine 11, cysteine 17/cysteine 41, cysteine 45/cysteine 57, and cysteine 58/cysteine 63.

As to expression, expressed by the venom gland.

The protein resides in the secreted. In terms of biological role, produces peripheral paralysis by blocking neuromuscular transmission at the postsynaptic site. Binds to the muscular nicotinic acetylcholine receptor (nAChR). The polypeptide is Frontoxin V (Micrurus frontalis (Coral snake)).